A 94-amino-acid chain; its full sequence is Large ribosomal subunit protein uL23 (94 aa).

The protein belongs to the universal ribosomal protein uL23 family. As to quaternary structure, part of the 50S ribosomal subunit. Contacts protein L29, and trigger factor when it is bound to the ribosome.

In terms of biological role, one of the early assembly proteins it binds 23S rRNA. One of the proteins that surrounds the polypeptide exit tunnel on the outside of the ribosome. Forms the main docking site for trigger factor binding to the ribosome. The sequence is that of Large ribosomal subunit protein uL23 from Latilactobacillus sakei subsp. sakei (strain 23K) (Lactobacillus sakei subsp. sakei).